A 256-amino-acid polypeptide reads, in one-letter code: Tryptophan synthase alpha chain (256 aa).

Active-site proton acceptor residues include Glu-45 and Asp-56.

It belongs to the TrpA family. As to quaternary structure, tetramer of two alpha and two beta chains.

The catalysed reaction is (1S,2R)-1-C-(indol-3-yl)glycerol 3-phosphate + L-serine = D-glyceraldehyde 3-phosphate + L-tryptophan + H2O. The protein operates within amino-acid biosynthesis; L-tryptophan biosynthesis; L-tryptophan from chorismate: step 5/5. The alpha subunit is responsible for the aldol cleavage of indoleglycerol phosphate to indole and glyceraldehyde 3-phosphate. The sequence is that of Tryptophan synthase alpha chain from Christiangramia forsetii (strain DSM 17595 / CGMCC 1.15422 / KT0803) (Gramella forsetii).